A 184-amino-acid chain; its full sequence is Putative DNA-directed RNA polymerase subunit 454R (184 aa).

Belongs to the archaeal Rpo5/eukaryotic RPB5 RNA polymerase subunit family.

Functionally, component of the DNA-dependent RNA polymerase that catalyzes the transcription in the cytoplasm of viral DNA into RNA using the four ribonucleoside triphosphates as substrates. The protein is Putative DNA-directed RNA polymerase subunit 454R of Invertebrate iridescent virus 6 (IIV-6).